Reading from the N-terminus, the 30-residue chain is Alpha-conotoxin EIVA (30 aa).

3 cysteine pairs are disulfide-bonded: Cys-2–Cys-16, Cys-3–Cys-11, and Cys-14–Cys-24. Pro-7, Pro-13, Pro-21, Pro-22, and Pro-27 each carry 4-hydroxyproline. Gly-30 carries the glycine amide modification.

In terms of tissue distribution, expressed by the venom duct.

The protein localises to the secreted. Functionally, alpha-conotoxins act on postsynaptic membranes, they bind to the nicotinic acetylcholine receptors (nAChR) and thus inhibit them. This toxin binds with high affinity to both fetal (alpha-1-beta-1-epsilon-delta (CHRNA1-CHRNB1-CHRND-CHRNE) subunits) and adult (alpha-1/beta-1/gamma/delta subunits) mammalian muscle nicotinic acetylcholine receptors (nAChR). This Conus ermineus (Agate cone) protein is Alpha-conotoxin EIVA.